We begin with the raw amino-acid sequence, 532 residues long: CTP synthase (532 aa).

The interval 1 to 267 (MTKYIFVTGG…DDIVLEHLQL (267 aa)) is amidoligase domain. A CTP-binding site is contributed by S13. S13 is a UTP binding site. 14–19 (SIGKGI) contacts ATP. Position 54 (Y54) interacts with L-glutamine. D71 is an ATP binding site. D71 and E141 together coordinate Mg(2+). CTP contacts are provided by residues 148 to 150 (DIE), 188 to 193 (KTKPTQ), and K224. Residues 188-193 (KTKPTQ) and K224 contribute to the UTP site. The Glutamine amidotransferase type-1 domain maps to 292–532 (RIGLVGKYVS…DFVGAALKNK (241 aa)). G354 contributes to the L-glutamine binding site. Catalysis depends on C381, which acts as the Nucleophile; for glutamine hydrolysis. L-glutamine-binding positions include 382 to 385 (LGMQ), E405, and R462. Catalysis depends on residues H507 and E509.

It belongs to the CTP synthase family. Homotetramer.

The catalysed reaction is UTP + L-glutamine + ATP + H2O = CTP + L-glutamate + ADP + phosphate + 2 H(+). It carries out the reaction L-glutamine + H2O = L-glutamate + NH4(+). It catalyses the reaction UTP + NH4(+) + ATP = CTP + ADP + phosphate + 2 H(+). It functions in the pathway pyrimidine metabolism; CTP biosynthesis via de novo pathway; CTP from UDP: step 2/2. Allosterically activated by GTP, when glutamine is the substrate; GTP has no effect on the reaction when ammonia is the substrate. The allosteric effector GTP functions by stabilizing the protein conformation that binds the tetrahedral intermediate(s) formed during glutamine hydrolysis. Inhibited by the product CTP, via allosteric rather than competitive inhibition. Functionally, catalyzes the ATP-dependent amination of UTP to CTP with either L-glutamine or ammonia as the source of nitrogen. Regulates intracellular CTP levels through interactions with the four ribonucleotide triphosphates. This Listeria monocytogenes serovar 1/2a (strain ATCC BAA-679 / EGD-e) protein is CTP synthase.